Reading from the N-terminus, the 79-residue chain is UPF0654 protein C11D3.01c (79 aa).

The segment at 1 to 79 (MPNPGNVIGG…RAQEELENLE (79 aa)) is disordered. Over residues 22–45 (EETKQREKEYLEEHEGEVGEEHQK) the composition is skewed to basic and acidic residues.

Belongs to the UPF0654 (con-6) family.

The chain is UPF0654 protein C11D3.01c from Schizosaccharomyces pombe (strain 972 / ATCC 24843) (Fission yeast).